We begin with the raw amino-acid sequence, 315 residues long: uncharacterized protein (315 aa).

Helical transmembrane passes span Ile19 to Phe39, Thr56 to Phe76, and Pro81 to Ile101. Over residues Glu154–Gln171 the composition is skewed to polar residues. The segment at Glu154 to Asp214 is disordered. Residues Gly203 to Asp214 show a composition bias toward basic and acidic residues.

It belongs to the ATPase C chain family.

It is found in the mitochondrion membrane. This is an uncharacterized protein from Arabidopsis thaliana (Mouse-ear cress).